A 320-amino-acid chain; its full sequence is Taste receptor type 2 member 129 (320 aa).

Residues 1-8 (MDGIVQNM) are Extracellular-facing. The helical transmembrane segment at 9-29 (FTFIVIVEIIIGWIGNGFIAL) threads the bilayer. Topologically, residues 30 to 55 (VNCIHWYKRRKISALNQILTALAFSR) are cytoplasmic. The chain crosses the membrane as a helical span at residues 56–76 (IYLLLTVFTVIAVSTLYTHVL). The Extracellular segment spans residues 77-88 (VTRRVVKLINFH). A helical transmembrane segment spans residues 89–109 (LLFSNHFSMWLAACLGLYYFL). Residues 110-128 (KIAHFPNSIFVYLKMRINQ) are Cytoplasmic-facing. The helical transmembrane segment at 129-149 (VVSGTLLMSLGLLFLNTLLIN) threads the bilayer. The Extracellular segment spans residues 150–185 (SYIDTKIDDYREHLLYDFTSNNTASFYRVILVINNC). N-linked (GlcNAc...) asparagine glycosylation occurs at N170. A helical membrane pass occupies residues 186-206 (IFTSIPFTLSQSTFLLLIFSL). The Cytoplasmic portion of the chain corresponds to 207 to 233 (WRHYKKMQQHAQRCRDVLADAHIRVLQ). Residues 234 to 254 (TMVTYVLLCAIFFLSLSMQIL) form a helical membrane-spanning segment. The Extracellular portion of the chain corresponds to 255–264 (RSELLKNILY). The helical transmembrane segment at 265–285 (VRFCEIVAAVFPSGHSCVLIC) threads the bilayer. Over 286-320 (RDTNLRGTFLSVLSWLKQRFTSWIPNINCRSSCIF) the chain is Cytoplasmic.

The protein belongs to the G-protein coupled receptor T2R family.

It localises to the membrane. Putative taste receptor which may play a role in the perception of bitterness. In Mus musculus (Mouse), this protein is Taste receptor type 2 member 129.